Consider the following 495-residue polypeptide: tRNA-guanine(15) transglycosylase (495 aa).

The active-site Nucleophile is Asp-83. Asp-118 lines the substrate pocket. 2 residues coordinate Zn(2+): Cys-273 and Cys-278.

The protein belongs to the archaeosine tRNA-ribosyltransferase family. It depends on Zn(2+) as a cofactor.

It carries out the reaction guanosine(15) in tRNA + 7-cyano-7-deazaguanine = 7-cyano-7-carbaguanosine(15) in tRNA + guanine. It functions in the pathway tRNA modification; archaeosine-tRNA biosynthesis. Exchanges the guanine residue with 7-cyano-7-deazaguanine (preQ0) at position 15 in the dihydrouridine loop (D-loop) of archaeal tRNAs. This is tRNA-guanine(15) transglycosylase from Pyrobaculum aerophilum (strain ATCC 51768 / DSM 7523 / JCM 9630 / CIP 104966 / NBRC 100827 / IM2).